Reading from the N-terminus, the 251-residue chain is CDP-diacylglycerol pyrophosphatase (251 aa).

A helical transmembrane segment spans residues A4–W24.

Belongs to the Cdh family.

The protein resides in the cell inner membrane. The catalysed reaction is a CDP-1,2-diacyl-sn-glycerol + H2O = a 1,2-diacyl-sn-glycero-3-phosphate + CMP + 2 H(+). Its pathway is phospholipid metabolism; CDP-diacylglycerol degradation; phosphatidate from CDP-diacylglycerol: step 1/1. The protein is CDP-diacylglycerol pyrophosphatase of Shigella flexneri.